The following is a 398-amino-acid chain: 1-deoxy-D-xylulose 5-phosphate reductoisomerase (398 aa).

Residues T10, G11, S12, I13, K37, N38, and N124 each coordinate NADPH. Position 125 (K125) interacts with 1-deoxy-D-xylulose 5-phosphate. Residue E126 participates in NADPH binding. D150 contacts Mn(2+). The 1-deoxy-D-xylulose 5-phosphate site is built by S151, E152, S186, and H209. Mn(2+) is bound at residue E152. NADPH is bound at residue G215. Positions 222, 227, 228, and 231 each coordinate 1-deoxy-D-xylulose 5-phosphate. Residue E231 coordinates Mn(2+).

It belongs to the DXR family. In terms of assembly, homodimer. The cofactor is Mg(2+). Mn(2+) is required as a cofactor.

The catalysed reaction is 2-C-methyl-D-erythritol 4-phosphate + NADP(+) = 1-deoxy-D-xylulose 5-phosphate + NADPH + H(+). Its pathway is isoprenoid biosynthesis; isopentenyl diphosphate biosynthesis via DXP pathway; isopentenyl diphosphate from 1-deoxy-D-xylulose 5-phosphate: step 1/6. Its function is as follows. Catalyzes the NADPH-dependent rearrangement and reduction of 1-deoxy-D-xylulose-5-phosphate (DXP) to 2-C-methyl-D-erythritol 4-phosphate (MEP). This Buchnera aphidicola subsp. Acyrthosiphon pisum (strain 5A) protein is 1-deoxy-D-xylulose 5-phosphate reductoisomerase.